The primary structure comprises 275 residues: Bis(5'-nucleosyl)-tetraphosphatase, symmetrical (275 aa).

It belongs to the Ap4A hydrolase family.

It carries out the reaction P(1),P(4)-bis(5'-adenosyl) tetraphosphate + H2O = 2 ADP + 2 H(+). In terms of biological role, hydrolyzes diadenosine 5',5'''-P1,P4-tetraphosphate to yield ADP. The chain is Bis(5'-nucleosyl)-tetraphosphatase, symmetrical (apaH) from Haemophilus influenzae (strain ATCC 51907 / DSM 11121 / KW20 / Rd).